The chain runs to 311 residues: Serine hydrolase-like protein (311 aa).

One can recognise an AB hydrolase-1 domain in the interval 27–227 (PPVLCLHGWL…FVSKEMFVHS (201 aa)). Ser-102 is an active-site residue. At Ser-210 the chain carries Phosphoserine.

This sequence belongs to the AB hydrolase superfamily. As to expression, ubiquitous. High protein expression in skeletal and cardiac muscle.

It is found in the cytoplasm. The protein resides in the perinuclear region. It localises to the peroxisome. Probable serine hydrolase. May be related to cell muscle hypertrophy. In Mus musculus (Mouse), this protein is Serine hydrolase-like protein (Serhl).